Reading from the N-terminus, the 439-residue chain is MQVKENKQLCLISLGCSKNLVDSEVMLGKLYNYTLTNDVKSADVILINTCGFIESAKQESIQTILNAAKDKKEGAILIASGCLSERYKDEIKELIPEVDIFTGVGDYDKIDIMIAKKQNQFSEQVFLSEHYNARIITGSSVHAYVKISEGCNQKCSFCAIPSFKGKLQSRELDSILKEVEDLALKGYKDMTFIAQDSSSFLYDKGQKDGLIQLIRAIDKQQALKSARILYLYPSSTTLELIGAIESSPIFQNYFDMPIQHISDSMLKKMRRNSSQAHHLKLLNAMKQVKESFIRSTIIVGHPEENEGEFEELSAFLDEFRFDRLNIFAFSAEENTHAYSLEKVPKKTINARIKALNKIALKHQNHSFKALLNKPIKALVENKEGEYFYKARDLRWVPEVDGEILINDSELTTPLKPGHYTIMPSAFKDNILLAKVLSPF.

The 113-residue stretch at 7–119 (KQLCLISLGC…IDIMIAKKQN (113 aa)) folds into the MTTase N-terminal domain. Residues Cys-16, Cys-50, Cys-82, Cys-151, Cys-155, and Cys-158 each contribute to the [4Fe-4S] cluster site. Residues 137–368 (TGSSVHAYVK…ALKHQNHSFK (232 aa)) form the Radical SAM core domain.

The protein belongs to the methylthiotransferase family. RimO subfamily. It depends on [4Fe-4S] cluster as a cofactor.

It localises to the cytoplasm. It carries out the reaction L-aspartate(89)-[ribosomal protein uS12]-hydrogen + (sulfur carrier)-SH + AH2 + 2 S-adenosyl-L-methionine = 3-methylsulfanyl-L-aspartate(89)-[ribosomal protein uS12]-hydrogen + (sulfur carrier)-H + 5'-deoxyadenosine + L-methionine + A + S-adenosyl-L-homocysteine + 2 H(+). Catalyzes the methylthiolation of an aspartic acid residue of ribosomal protein uS12. The protein is Ribosomal protein uS12 methylthiotransferase RimO of Helicobacter pylori (strain G27).